The sequence spans 232 residues: 5'-methylthioadenosine/S-adenosylhomocysteine nucleosidase (232 aa).

The Proton acceptor role is filled by glutamate 12. Residues glycine 78, isoleucine 152, and 173–174 contribute to the substrate site; that span reads ME. Aspartate 197 serves as the catalytic Proton donor.

It belongs to the PNP/UDP phosphorylase family. MtnN subfamily. Homodimer.

The enzyme catalyses S-adenosyl-L-homocysteine + H2O = S-(5-deoxy-D-ribos-5-yl)-L-homocysteine + adenine. The catalysed reaction is S-methyl-5'-thioadenosine + H2O = 5-(methylsulfanyl)-D-ribose + adenine. It carries out the reaction 5'-deoxyadenosine + H2O = 5-deoxy-D-ribose + adenine. The protein operates within amino-acid biosynthesis; L-methionine biosynthesis via salvage pathway; S-methyl-5-thio-alpha-D-ribose 1-phosphate from S-methyl-5'-thioadenosine (hydrolase route): step 1/2. In terms of biological role, catalyzes the irreversible cleavage of the glycosidic bond in both 5'-methylthioadenosine (MTA) and S-adenosylhomocysteine (SAH/AdoHcy) to adenine and the corresponding thioribose, 5'-methylthioribose and S-ribosylhomocysteine, respectively. Also cleaves 5'-deoxyadenosine, a toxic by-product of radical S-adenosylmethionine (SAM) enzymes, into 5-deoxyribose and adenine. Thus, is required for in vivo function of the radical SAM enzymes biotin synthase and lipoic acid synthase, that are inhibited by 5'-deoxyadenosine accumulation. The chain is 5'-methylthioadenosine/S-adenosylhomocysteine nucleosidase from Salmonella arizonae (strain ATCC BAA-731 / CDC346-86 / RSK2980).